The sequence spans 121 residues: Small ribosomal subunit protein bS6 (121 aa).

This sequence belongs to the bacterial ribosomal protein bS6 family.

Binds together with bS18 to 16S ribosomal RNA. In Rickettsia felis (strain ATCC VR-1525 / URRWXCal2) (Rickettsia azadi), this protein is Small ribosomal subunit protein bS6.